The following is a 121-amino-acid chain: Protein MGF 110-5L (121 aa).

Positions methionine 1–leucine 20 are cleaved as a signal peptide. N-linked (GlcNAc...) asparagine; by host glycans are attached at residues asparagine 62 and asparagine 116.

This sequence belongs to the asfivirus MGF 110 family.

This chain is Protein MGF 110-5L, found in African swine fever virus (isolate Portugal/Lis 57/1957) (ASFV).